The chain runs to 325 residues: Dehydrogenase/reductase SDR family member 7B (325 aa).

Residues methionine 1–aspartate 17 lie on the Cytoplasmic side of the membrane. A helical; Signal-anchor for type II membrane protein membrane pass occupies residues phenylalanine 18–phenylalanine 38. Topologically, residues lysine 39 to serine 325 are lumenal. 2 residues coordinate NAD(+): serine 62 and leucine 64. Serine 194 provides a ligand contact to substrate. Tyrosine 207, lysine 211, and threonine 242 together coordinate NAD(+). Tyrosine 207 serves as the catalytic Proton acceptor.

It belongs to the short-chain dehydrogenases/reductases (SDR) family.

The protein resides in the endoplasmic reticulum membrane. Its function is as follows. Putative oxidoreductase. The chain is Dehydrogenase/reductase SDR family member 7B (DHRS7B) from Bos taurus (Bovine).